The sequence spans 733 residues: MKVHSLFLMAIFFYLAYTQLVKAQPRDDCQTRCGDVPIDYPFGISTGCYYPGDDSFNITCEEDKPNVLSNIEVLNFNHSGQLRGLIPRSTVCYDQQTNNDFESLWFRLDNLSFSPNNKFTLVGCNAWALLSTFGIQNYSTGCMSLCDTPPPPNSKCNGVGCCRTEVSIPLDSHRIETQPSRFENMTSVEHFNPCSYAFFVEDGMFNFSSLEDLKDLRNVTRFPVLLDWSIGNQTCEQVVGRNICGGNSTCFDSTRGKGYNCKCLQGFDGNPYLSDGCQDINECTTRIHNCSDTSTCENTLGSFHCQCPSGSDLNTTTMSCIDTPKEEPKYLGWTTVLLGTTIGFLIILLTISYIQQKMRHRKNTELRQQFFEQNGGGMLIQRLSGAGPSNVDVKIFTEEGMKEATDGYNESRILGQGGQGTVYKGILQDNSIVAIKKARLGDRSQVEQFINEVLVLSQINHRNVVKLLGCCLETEVPLLVYEFISSGTLFDHLHGSMFDSSLTWEHRLRIAIEVAGTLAYLHSYASIPIIHRDVKTANILLDENLTAKVADFGASRLIPMDQEQLTTMVQGTLGYLDPEYYNTGLLNEKSDVYSFGVVLMELLSGEKALCFERPQSSKHLVSYFVSAMKENRLHEIIDGQVMNEYNQREIQESARIAVECTRIMGEERPSMKEVAAELEALRVKTTKHQWSDQYPKEVEHLLGVQILSTQGDTSSIGYDSIQNVTRLDIETGR.

Residues 1 to 23 (MKVHSLFLMAIFFYLAYTQLVKA) form the signal peptide. Residues 24–330 (QPRDDCQTRC…IDTPKEEPKY (307 aa)) lie on the Extracellular side of the membrane. N-linked (GlcNAc...) asparagine glycans are attached at residues Asn57, Asn77, Asn110, Asn137, Asn184, Asn206, Asn218, Asn232, and Asn247. Residues 231-278 (GNQTCEQVVGRNICGGNSTCFDSTRGKGYNCKCLQGFDGNPYLSDGCQ) form the EGF-like 1 domain. 6 disulfides stabilise this stretch: Cys235–Cys250, Cys244–Cys261, Cys263–Cys277, Cys283–Cys296, Cys290–Cys305, and Cys307–Cys320. One can recognise an EGF-like 2; calcium-binding domain in the interval 279 to 321 (DINECTTRIHNCSDTSTCENTLGSFHCQCPSGSDLNTTTMSCI). The N-linked (GlcNAc...) asparagine glycan is linked to Asn289. N-linked (GlcNAc...) asparagine glycosylation occurs at Asn314. Residues 331 to 351 (LGWTTVLLGTTIGFLIILLTI) traverse the membrane as a helical segment. Residues 352–733 (SYIQQKMRHR…VTRLDIETGR (382 aa)) are Cytoplasmic-facing. Position 397 is a phosphothreonine (Thr397). In terms of domain architecture, Protein kinase spans 408 to 691 (YNESRILGQG…RVKTTKHQWS (284 aa)). ATP is bound by residues 414–422 (LGQGGQGTV) and Lys436. Tyr481 bears the Phosphotyrosine mark. Asp533 acts as the Proton acceptor in catalysis. 2 positions are modified to phosphothreonine: Thr567 and Thr572. Phosphotyrosine is present on Tyr580.

The protein belongs to the protein kinase superfamily. Ser/Thr protein kinase family. In terms of tissue distribution, predominantly expressed in green tissues such as stems and leaves.

It is found in the membrane. It carries out the reaction L-seryl-[protein] + ATP = O-phospho-L-seryl-[protein] + ADP + H(+). The catalysed reaction is L-threonyl-[protein] + ATP = O-phospho-L-threonyl-[protein] + ADP + H(+). Functionally, serine/threonine-protein kinase that may function as a signaling receptor of extracellular matrix component. Binding to pectin may have significance in the control of cell expansion, morphogenesis and development. The protein is Wall-associated receptor kinase 5 (WAK5) of Arabidopsis thaliana (Mouse-ear cress).